A 500-amino-acid polypeptide reads, in one-letter code: L-arabinose isomerase (500 aa).

Mn(2+) contacts are provided by glutamate 306, glutamate 333, histidine 350, and histidine 450.

This sequence belongs to the arabinose isomerase family. Homohexamer. It depends on Mn(2+) as a cofactor.

It carries out the reaction beta-L-arabinopyranose = L-ribulose. It functions in the pathway carbohydrate degradation; L-arabinose degradation via L-ribulose; D-xylulose 5-phosphate from L-arabinose (bacterial route): step 1/3. Catalyzes the conversion of L-arabinose to L-ribulose. In Yersinia enterocolitica serotype O:8 / biotype 1B (strain NCTC 13174 / 8081), this protein is L-arabinose isomerase.